A 207-amino-acid polypeptide reads, in one-letter code: Guanylate kinase (207 aa).

The 181-residue stretch at 4–184 (GTLYIVSAPS…ALMDFKAIIR (181 aa)) folds into the Guanylate kinase-like domain. An ATP-binding site is contributed by 11–18 (APSGAGKS).

Belongs to the guanylate kinase family.

Its subcellular location is the cytoplasm. It carries out the reaction GMP + ATP = GDP + ADP. The catalysed reaction is dZMP + ATP = dZDP + ADP. It functions in the pathway purine metabolism. Functionally, essential for recycling GMP and indirectly, cGMP. Its function is as follows. (Microbial infection) Catalyzes the phosphorylation of dZMP to dZDP, when the bacterium is infected by a phage that produces the substrate for the synthesis of dZTP (2- amino-2'-deoxyadenosine 5'-triphosphate), which is then used by the phage as a DNA polymerase substrate. The chain is Guanylate kinase (gmk) from Vibrio cholerae serotype O1 (strain ATCC 39315 / El Tor Inaba N16961).